The sequence spans 158 residues: Dysbindin domain-containing protein 2 (158 aa).

The disordered stretch occupies residues 79–158 (FLPCEESSPA…DGGAEPGPCS (80 aa)). A compositionally biased stretch (low complexity) spans 106 to 131 (PTSDRTTSRTSSLSSDSSNLRSPNPS). A phosphoserine mark is found at serine 119 and serine 120. Threonine 137 is subject to Phosphothreonine. Serine 142 is subject to Phosphoserine. Residues 142 to 151 (SDEEDGDDGG) show a composition bias toward acidic residues.

Belongs to the dysbindin family. In terms of assembly, monomer. Interacts with CSNK1D and CSNK1E.

In terms of biological role, may modulate the activity of casein kinase-1. Inhibits CSNK1D autophosphorylation (in vitro). This is Dysbindin domain-containing protein 2 (Dbndd2) from Mus musculus (Mouse).